A 271-amino-acid polypeptide reads, in one-letter code: (21S)-21-acetoxyl-apo-melianone synthase SDR (271 aa).

Ser150 functions as the Proton donor in the catalytic mechanism. The Proton acceptor role is filled by Tyr163. Lys167 acts as the Proton donor/acceptor in catalysis.

It belongs to the short-chain dehydrogenases/reductases (SDR) family. In terms of tissue distribution, mainly expressed in petioles.

The catalysed reaction is 21-O-acetyl-isomeliandiol + A = (21S)-21-acetoxyl-apo-melianone + AH2. It functions in the pathway secondary metabolite biosynthesis; terpenoid biosynthesis. Functionally, oxidoreductase involved in the biosynthesis of limonoids triterpene natural products such as azadirachtin, an antifeedant widely used as bioinsecticide, and possessing many medicinal applications including anti-tumoral, anti-malarial, anti-rheumatic, antibacterial, anti-inflammatory, anti-pyretic and diuretic effects. Catalyzes the oxidation of 21-O-acetyl-isomeliandiol to (21S)-21-acetoxyl-apo-melianone. This Melia azedarach (Chinaberry tree) protein is (21S)-21-acetoxyl-apo-melianone synthase SDR.